We begin with the raw amino-acid sequence, 187 residues long: EP300-interacting inhibitor of differentiation 1 (187 aa).

Positions 1 to 118 (MSEMAELSEL…YDYPEEEQLS (118 aa)) are disordered. Acidic residues-rich tracts occupy residues 52–63 (LEEEGPMEEEEA) and 93–116 (FESE…EEEQ). The interval 54 to 120 (EEGPMEEEEA…YPEEEQLSGA (67 aa)) is interaction with NR0B2. Positions 178–182 (LGCDE) match the LXCXE motif motif.

Interacts via its LXCXE motif with the entire pocket region of RB1. Interacts with EP300, NR0B2 and TRIM27. Ubiquitinated in U2OS osteosarcoma cells and is rapidly degraded by proteasome as cells exit the cell cycle exit. In terms of tissue distribution, widely expressed. Most abundantly expressed in heart, skeletal muscle, pancreas, brain and testis. Expressed at much lower levels in placenta and peripheral blood leukocyte. Barely detectable in lung. Also weakly expressed in lung carcinoma A-549 and various leukemia cell lines.

The protein localises to the nucleus. Its subcellular location is the cytoplasm. In terms of biological role, interacts with RB1 and EP300 and acts as a repressor of MYOD1 transactivation. Inhibits EP300 and CBP histone acetyltransferase activity. May be involved in coupling cell cycle exit to the transcriptional activation of genes required for cellular differentiation. May act as a candidate coinhibitory factor for NR0B2 that can be directly linked to transcription inhibitory mechanisms. The sequence is that of EP300-interacting inhibitor of differentiation 1 from Homo sapiens (Human).